The primary structure comprises 332 residues: Biotin synthase (332 aa).

The Radical SAM core domain occupies 53-282 (YFGKKVKLNM…SKEIRISGGR (230 aa)). C71, C75, and C78 together coordinate [4Fe-4S] cluster. C115, C147, C207, and R277 together coordinate [2Fe-2S] cluster.

It belongs to the radical SAM superfamily. Biotin synthase family. In terms of assembly, homodimer. It depends on [4Fe-4S] cluster as a cofactor. [2Fe-2S] cluster is required as a cofactor.

The enzyme catalyses (4R,5S)-dethiobiotin + (sulfur carrier)-SH + 2 reduced [2Fe-2S]-[ferredoxin] + 2 S-adenosyl-L-methionine = (sulfur carrier)-H + biotin + 2 5'-deoxyadenosine + 2 L-methionine + 2 oxidized [2Fe-2S]-[ferredoxin]. The protein operates within cofactor biosynthesis; biotin biosynthesis; biotin from 7,8-diaminononanoate: step 2/2. Its function is as follows. Catalyzes the conversion of dethiobiotin (DTB) to biotin by the insertion of a sulfur atom into dethiobiotin via a radical-based mechanism. This Bacillus cytotoxicus (strain DSM 22905 / CIP 110041 / 391-98 / NVH 391-98) protein is Biotin synthase.